We begin with the raw amino-acid sequence, 468 residues long: MKLPDKLGPIHFIGIGGIGMSGIAEVMHNLGYTVQGSDASDNANVRRLAEKGMRTFVGHDAKNVEEAALVVVSTAIRRDNPELQAARERRLPVVRRAEMLAELMRFKSCVAIAGTHGKTTTTSLVATLLDAGNLDPTVINGGIINAYGTNARMGAGEWMVVEADESDGTFLKLPADVAIVTNIDPEHLDHFGSFDAIKDAFRRFIDNIPFYGFAVMCIDHPVVQDLVGHIEDRRIITYGENPQADVRLIDVDLRGGQSRFRVMIRDRRPGYRMEMEDLVLPMPGKHNALNATAALAVAHELGVKPDAIRQALAGFGGVKRRFTRTGEWNGATIFDDYGHHPVEIKAVLKAARASTEHGVIAVVQPHRYTRLQSLFDDFCTCFNDADTVIVAPVYAAGEQPIEGFDRDSLVAGLRSRGHRDARALERPEELAGIIADLAKPGDYVVCLGAGTITQWAYALPDELTARGR.

114-120 (GTHGKTT) lines the ATP pocket.

This sequence belongs to the MurCDEF family.

The protein resides in the cytoplasm. The catalysed reaction is UDP-N-acetyl-alpha-D-muramate + L-alanine + ATP = UDP-N-acetyl-alpha-D-muramoyl-L-alanine + ADP + phosphate + H(+). It functions in the pathway cell wall biogenesis; peptidoglycan biosynthesis. In terms of biological role, cell wall formation. The polypeptide is UDP-N-acetylmuramate--L-alanine ligase (Methylobacterium radiotolerans (strain ATCC 27329 / DSM 1819 / JCM 2831 / NBRC 15690 / NCIMB 10815 / 0-1)).